The following is a 79-amino-acid chain: RNA-binding protein Hfq (79 aa).

One can recognise a Sm domain in the interval 9–69 (DTFLNHLRKE…ISTFTPQRPV (61 aa)).

This sequence belongs to the Hfq family. In terms of assembly, homohexamer.

RNA chaperone that binds small regulatory RNA (sRNAs) and mRNAs to facilitate mRNA translational regulation in response to envelope stress, environmental stress and changes in metabolite concentrations. Also binds with high specificity to tRNAs. This Brevibacillus brevis (strain 47 / JCM 6285 / NBRC 100599) protein is RNA-binding protein Hfq.